A 371-amino-acid chain; its full sequence is MQIQNNNYKGLIPPYILQNIYKNTSESEKDNVLMTLNHTQSLMLDSVIKTSDSIDNTDDEVVSDTLHRSIYDAKNETKLPGTLVRDEGDPDNGDVAVDNAYKYLEATYNFYKEVFNRNSLDDKGMKLIATVHYGKEYMNAYWGRGQMVFGDGDGKVFNNFTTSIDVIGHELSHGVIEKTADLIYFFQSGALNESIADVFGSLVRQHYLKQKADEASWVVGEELLAKGIKGVGIRSMKEPGKAYDDPLLGKNPQPGHMDDFKDYPIYRDNGGVHVNSGIPNKAFYNLAIKLGGYAWEKAGKIWYNTLLDKDLARDTTFLSFAKLTVKHARDLFDEDVEKATIDSWKEVGIKVKEEDKDKGKDEGKDKAETKV.

A Zn(2+)-binding site is contributed by histidine 169. Glutamate 170 is a catalytic residue. The Zn(2+) site is built by histidine 173 and glutamate 193. Residue histidine 273 is the Proton donor of the active site. The disordered stretch occupies residues 352-371; sequence KEEDKDKGKDEGKDKAETKV.

Belongs to the peptidase M4 family. Zn(2+) is required as a cofactor.

The protein localises to the secreted. Inhibited by 8 mM 1,10-phenanthroline, but not by EDTA or PMSF. Metalloprotease involved in the inhibition of insect antibacterial peptides. Reduces the antibacterial activity of G.mellonella hemolymph by 50%. Reduces the antibacterial activity of cecropin A by 80% and completely inhibits cecropin B. In Photorhabdus sp. (strain Az29), this protein is Protease PrtS.